We begin with the raw amino-acid sequence, 182 residues long: T-cell surface glycoprotein CD3 gamma chain (182 aa).

Residues 1 to 22 (MEQGKGLAVLILAIILLQGTLA) form the signal peptide. At 23–116 (QSIKGNHLVK…CIELNAATIS (94 aa)) the chain is on the extracellular side. Residues 37–94 (QEDGSVLLTCDAEAKNITWFKDGKMIGFLTEDKKKWNLGSNAKDPRGMYQCKGSQNKS) form the Ig-like domain. A disulfide bridge links Cys46 with Cys87. N-linked (GlcNAc...) asparagine glycans are attached at residues Asn52 and Asn92. The chain crosses the membrane as a helical span at residues 117 to 137 (GFLFAEIVSIFVLAVGVYFIA). At 138 to 182 (GQDGVRQSRASDKQTLLPNDQLYQPLKDREDDQYSHLQGNQLRRN) the chain is on the cytoplasmic side. Ser145 is subject to Phosphoserine. A Phosphoserine; by PKC modification is found at Ser148. One can recognise an ITAM domain in the interval 149–177 (DKQTLLPNDQLYQPLKDREDDQYSHLQGN). The short motif at 153–154 (LL) is the Di-leucine motif element.

As to quaternary structure, the TCR-CD3 complex is composed of a CD3D/CD3E and a CD3G/CD3E heterodimers that preferentially associate with TCRalpha and TCRbeta, respectively, to form TCRalpha/CD3E/CD3G and TCRbeta/CD3G/CD3E trimers. In turn, the hexamer interacts with CD3Z homodimer to form the TCR-CD3 complex. Alternatively, TCRalpha and TCRbeta can be replaced by TCRgamma and TCRdelta. Phosphorylated on Tyr residues after T-cell receptor triggering by LCK in association with CD4/CD8. Phosphorylated also by PKC; leading to the TCR complex down-regulation. Post-translationally, phosphorylated on Tyr residues after T-cell receptor triggering by LCK in association with CD4/CD8.

Its subcellular location is the cell membrane. Its function is as follows. Part of the TCR-CD3 complex present on T-lymphocyte cell surface that plays an essential role in adaptive immune response. When antigen presenting cells (APCs) activate T-cell receptor (TCR), TCR-mediated signals are transmitted across the cell membrane by the CD3 chains CD3D, CD3E, CD3G and CD3Z. All CD3 chains contain immunoreceptor tyrosine-based activation motifs (ITAMs) in their cytoplasmic domain. Upon TCR engagement, these motifs become phosphorylated by Src family protein tyrosine kinases LCK and FYN, resulting in the activation of downstream signaling pathways. In addition to this role of signal transduction in T-cell activation, CD3G plays an essential role in the dynamic regulation of TCR expression at the cell surface. Indeed, constitutive TCR cycling is dependent on the di-leucine-based (diL) receptor-sorting motif present in CD3G. This Homo sapiens (Human) protein is T-cell surface glycoprotein CD3 gamma chain (CD3G).